Here is a 457-residue protein sequence, read N- to C-terminus: Multidrug resistance protein MdtK (457 aa).

12 helical membrane-spanning segments follow: residues 11–31 (LLAL…MGFV), 53–73 (IWLP…PVVA), 93–113 (WLAG…GYII), 127–147 (AVGY…FQVA), 160–180 (GMVM…IFIY), 191–211 (VGCG…MLWW), 243–263 (LPIA…ALLV), 276–296 (IALN…AAVT), 316–336 (RTGV…TVLM), 357–377 (LMLL…GSGI), 387–407 (IFFI…YLLA), and 418–438 (PAGF…MMML).

The protein belongs to the multi antimicrobial extrusion (MATE) (TC 2.A.66.1) family. MdtK subfamily.

The protein localises to the cell inner membrane. In terms of biological role, multidrug efflux pump that functions probably as a Na(+)/drug antiporter. This is Multidrug resistance protein MdtK from Klebsiella pneumoniae subsp. pneumoniae (strain ATCC 700721 / MGH 78578).